The sequence spans 1487 residues: Collagen alpha-1(II) chain (1487 aa).

An N-terminal signal peptide occupies residues 1 to 25 (MIRLGAPQTLVLLTLLVAAVLRCHG). The propeptide at 26–181 (QDVQKAGSCV…PPGLGGNFAA (156 aa)) is N-terminal propeptide. The 59-residue stretch at 32–90 (GSCVQDGQRYNDKDVWKPEPCRICVCDTGTVLCDDIICEDMKDCLSPETPFGECCPICS) folds into the VWFC domain. The tract at residues 96–1234 (ASGQPGPKGQ…GLGQREKGPD (1139 aa)) is disordered. Composition is skewed to basic and acidic residues over residues 105–116 (QKGEPGDIKDIV) and 133–154 (PRGD…RDGE). A compositionally biased stretch (pro residues) spans 158–173 (PGNPGPPGPPGPPGPP). K190 is subject to 5-hydroxylysine. K190 carries O-linked (Gal...) hydroxylysine glycosylation. Over residues 192–203 (GGAQMGVMQGPM) the composition is skewed to low complexity. The interval 201–1214 (GPMGPMGPRG…PGPPGPPGPP (1014 aa)) is triple-helical region. Positions 208-217 (PRGPPGPAGA) are enriched in pro residues. P212, P218, P230, P233, P245, P248, P251, P260, P269, P278, P281, and P284 each carry hydroxyproline. Residues 218-239 (PGPQGFQGNPGEPGEPGVSGPM) show a composition bias toward low complexity. Residues 241-250 (PRGPPGPPGK) are compositionally biased toward pro residues. Over residues 251–265 (PGDDGEAGKPGKSGE) the composition is skewed to basic and acidic residues. Position 287 is a 5-hydroxylysine (K287). K287 carries O-linked (Gal...) hydroxylysine glycosylation. P293 carries the post-translational modification Hydroxyproline. K299 bears the 5-hydroxylysine mark. K299 carries O-linked (Gal...) hydroxylysine glycosylation. P305 is subject to Hydroxyproline. K308 carries the post-translational modification 5-hydroxylysine. K308 carries an O-linked (Gal...) hydroxylysine glycan. Positions 310–320 (ESGSPGENGSP) are enriched in low complexity. Hydroxyproline is present on residues P314, P320, P329, P350, P356, P365, P368, and P371. Residues 335–350 (TGPAGAAGARGNDGQP) are compositionally biased toward low complexity. The span at 360 to 369 (GPAGGPGFPG) shows a compositional bias: gly residues. Composition is skewed to low complexity over residues 370 to 382 (APGA…PTGA) and 391 to 431 (PRGE…AGAP). A 5-hydroxylysine modification is found at K374. A glycan (O-linked (Gal...) hydroxylysine) is linked at K374. A hydroxyproline mark is found at P395, P398, P401, P410, and P416. Residue K419 is modified to 5-hydroxylysine. Residues P425, P431, P434, and P440 each carry the hydroxyproline modification. Over residues 433–442 (FPGPRGPPGP) the composition is skewed to pro residues. K452 bears the 5-hydroxylysine mark. At P458 the chain carries Hydroxyproline. K464 and K470 each carry 5-hydroxylysine. P473, P482, P497, P506, P512, and P518 each carry hydroxyproline. A 5-hydroxylysine modification is found at K527. P530 carries the post-translational modification Hydroxyproline. K542 is modified (5-hydroxylysine). A hydroxyproline mark is found at P551, P557, P566, P581, P587, P590, P599, and P605. K608 carries the post-translational modification 5-hydroxylysine. O-linked (Gal...) hydroxylysine glycosylation occurs at K608. P614 carries the hydroxyproline modification. Position 620 is a 5-hydroxylysine (K620). K620 carries an O-linked (Gal...) hydroxylysine glycan. Low complexity predominate over residues 622-631 (LPGAPGLRGL). Hydroxyproline is present on residues P623, P626, P632, P644, P659, and P668. The span at 656 to 667 (QGAPGPSGFQGL) shows a compositional bias: low complexity. A 3-hydroxyproline modification is found at P670. 2 positions are modified to hydroxyproline: P671 and P674. Low complexity predominate over residues 721-736 (LPGTPGTDGPKGAAGP). The span at 764 to 775 (KGDRGDVGEKGP) shows a compositional bias: basic and acidic residues. Low complexity-rich tracts occupy residues 833–848 (AGFA…PGAK) and 877–913 (PTGV…SNGN). P907 carries the post-translational modification 3-hydroxyproline. P908, P914, and P920 each carry 4-hydroxyproline. Pro residues predominate over residues 1069-1079 (APGPPGSPGPA). Residues 1091 to 1109 (AGAQGPMGPAGPAGARGMP) are compositionally biased toward low complexity. The segment covering 1115-1129 (RGDKGETGEAGERGL) has biased composition (basic and acidic residues). 5-hydroxylysine is present on K1130. O-linked (Gal...) hydroxylysine glycosylation occurs at K1130. A 3-hydroxyproline modification is found at P1144. Residues 1148–1157 (SGDQGASGPA) are compositionally biased toward low complexity. P1181 bears the 4-hydroxyproline mark. P1186 is subject to 3-hydroxyproline. Position 1187 is a 4-hydroxyproline (P1187). Positions 1199–1216 (AGPPGNPGPPGPPGPPGP) are enriched in pro residues. P1201 is modified (3-hydroxyproline). 2 positions are modified to 4-hydroxyproline: P1202 and P1205. P1207 carries the 3-hydroxyproline modification. Residues P1208 and P1211 each carry the 4-hydroxyproline modification. The residue at position 1213 (P1213) is a 3-hydroxyproline. P1214 carries the 4-hydroxyproline modification. A nonhelical region (C-terminal) region spans residues 1215–1241 (GPGIDMSAFAGLGQREKGPDPLQYMRA). Residues 1253–1487 (AEVDATLKSL…GVDIGPVCFL (235 aa)) form the Fibrillar collagen NC1 domain. 3 disulfide bridges follow: C1283/C1315, C1323/C1485, and C1393/C1438. D1301, N1303, Q1304, C1306, and D1309 together coordinate Ca(2+). N1388 is a glycosylation site (N-linked (GlcNAc...) asparagine).

The protein belongs to the fibrillar collagen family. As to quaternary structure, homotrimers of alpha 1(II) chains. In terms of processing, probably 3-hydroxylated on prolines by LEPREL1. Proline residues at the third position of the tripeptide repeating unit (G-X-P) are hydroxylated in some or all of the chains. Proline residues at the second position of the tripeptide repeating unit (G-P-X) are hydroxylated in some of the chains. Post-translationally, O-linked glycans consist of Glc-Gal disaccharides bound to the oxygen atom of post-translationally added hydroxyl groups. Contains mostly 4-hydroxyproline. Prolines at the third position of the tripeptide repeating unit (G-X-P) are 4-hydroxylated in some or all of the chains. In terms of processing, contains 3-hydroxyproline at a few sites. This modification occurs on the first proline residue in the sequence motif Gly-Pro-Hyp, where Hyp is 4-hydroxyproline. Post-translationally, lysine residues at the third position of the tripeptide repeating unit (G-X-Y) are 5-hydroxylated in some or all of the chains. O-glycosylated on hydroxylated lysine residues. The O-linked glycan consists of a Glc-Gal disaccharide.

The protein resides in the secreted. Its subcellular location is the extracellular space. It is found in the extracellular matrix. Its function is as follows. Type II collagen is specific for cartilaginous tissues. It is essential for the normal embryonic development of the skeleton, for linear growth and for the ability of cartilage to resist compressive forces. The polypeptide is Collagen alpha-1(II) chain (Bos taurus (Bovine)).